Here is a 124-residue protein sequence, read N- to C-terminus: Glycine cleavage system H protein (124 aa).

In terms of domain architecture, Lipoyl-binding spans 19 to 101 (VATVGITDHA…ESGAWFFRMT (83 aa)). Lys-60 carries the N6-lipoyllysine modification.

It belongs to the GcvH family. In terms of assembly, the glycine cleavage system is composed of four proteins: P, T, L and H. It depends on (R)-lipoate as a cofactor.

Functionally, the glycine cleavage system catalyzes the degradation of glycine. The H protein shuttles the methylamine group of glycine from the P protein to the T protein. This Acidiphilium cryptum (strain JF-5) protein is Glycine cleavage system H protein.